The primary structure comprises 389 residues: Phospho-N-acetylmuramoyl-pentapeptide-transferase (389 aa).

Helical transmembrane passes span 25–45 (RAVM…PWVI), 74–94 (MGGV…CDWG), 97–117 (FIWV…VDDY), 134–154 (FFWQ…SVSE), 190–210 (VSYP…IVGS), 222–242 (GLVI…AYVM), 259–279 (AGEL…FLWF), 286–306 (VFMG…VAVI), 311–331 (IVLF…MLQV), and 366–386 (QVTV…LSTL).

The protein belongs to the glycosyltransferase 4 family. MraY subfamily. Mg(2+) is required as a cofactor.

It is found in the cell inner membrane. It catalyses the reaction UDP-N-acetyl-alpha-D-muramoyl-L-alanyl-gamma-D-glutamyl-meso-2,6-diaminopimeloyl-D-alanyl-D-alanine + di-trans,octa-cis-undecaprenyl phosphate = di-trans,octa-cis-undecaprenyl diphospho-N-acetyl-alpha-D-muramoyl-L-alanyl-D-glutamyl-meso-2,6-diaminopimeloyl-D-alanyl-D-alanine + UMP. The protein operates within cell wall biogenesis; peptidoglycan biosynthesis. In terms of biological role, catalyzes the initial step of the lipid cycle reactions in the biosynthesis of the cell wall peptidoglycan: transfers peptidoglycan precursor phospho-MurNAc-pentapeptide from UDP-MurNAc-pentapeptide onto the lipid carrier undecaprenyl phosphate, yielding undecaprenyl-pyrophosphoryl-MurNAc-pentapeptide, known as lipid I. The protein is Phospho-N-acetylmuramoyl-pentapeptide-transferase of Cupriavidus pinatubonensis (strain JMP 134 / LMG 1197) (Cupriavidus necator (strain JMP 134)).